The chain runs to 117 residues: Large ribosomal subunit protein uL18 (117 aa).

This sequence belongs to the universal ribosomal protein uL18 family. Part of the 50S ribosomal subunit; part of the 5S rRNA/L5/L18/L25 subcomplex. Contacts the 5S and 23S rRNAs.

This is one of the proteins that bind and probably mediate the attachment of the 5S RNA into the large ribosomal subunit, where it forms part of the central protuberance. The polypeptide is Large ribosomal subunit protein uL18 (Pseudoalteromonas atlantica (strain T6c / ATCC BAA-1087)).